The following is a 208-amino-acid chain: ATP-dependent Clp protease proteolytic subunit (208 aa).

The active-site Nucleophile is Ser-106. Residue His-131 is part of the active site.

Belongs to the peptidase S14 family. As to quaternary structure, fourteen ClpP subunits assemble into 2 heptameric rings which stack back to back to give a disk-like structure with a central cavity, resembling the structure of eukaryotic proteasomes.

It is found in the cytoplasm. The enzyme catalyses Hydrolysis of proteins to small peptides in the presence of ATP and magnesium. alpha-casein is the usual test substrate. In the absence of ATP, only oligopeptides shorter than five residues are hydrolyzed (such as succinyl-Leu-Tyr-|-NHMec, and Leu-Tyr-Leu-|-Tyr-Trp, in which cleavage of the -Tyr-|-Leu- and -Tyr-|-Trp bonds also occurs).. Its function is as follows. Cleaves peptides in various proteins in a process that requires ATP hydrolysis. Has a chymotrypsin-like activity. Plays a major role in the degradation of misfolded proteins. This chain is ATP-dependent Clp protease proteolytic subunit, found in Roseobacter denitrificans (strain ATCC 33942 / OCh 114) (Erythrobacter sp. (strain OCh 114)).